A 362-amino-acid polypeptide reads, in one-letter code: 3-dehydroquinate synthase (362 aa).

NAD(+) is bound by residues 72–77 (SGEQAK), 106–110 (GVVGD), 130–131 (TT), Lys-142, and Lys-151. Residues Glu-184, His-246, and His-263 each contribute to the Zn(2+) site.

Belongs to the sugar phosphate cyclases superfamily. Dehydroquinate synthase family. It depends on NAD(+) as a cofactor. Co(2+) serves as cofactor. Zn(2+) is required as a cofactor.

It is found in the cytoplasm. The catalysed reaction is 7-phospho-2-dehydro-3-deoxy-D-arabino-heptonate = 3-dehydroquinate + phosphate. The protein operates within metabolic intermediate biosynthesis; chorismate biosynthesis; chorismate from D-erythrose 4-phosphate and phosphoenolpyruvate: step 2/7. In terms of biological role, catalyzes the conversion of 3-deoxy-D-arabino-heptulosonate 7-phosphate (DAHP) to dehydroquinate (DHQ). In Bacillus subtilis (strain 168), this protein is 3-dehydroquinate synthase.